Here is a 285-residue protein sequence, read N- to C-terminus: Eukaryotic translation initiation factor 3 subunit J (285 aa).

Disordered regions lie at residues 1–86 (MSWD…QLDE) and 232–285 (QARL…DDFM). A compositionally biased stretch (acidic residues) spans 22-41 (WEDEEDDGPVLESWDVDPEE). Residues 36–81 (DVDPEEEEKKKKEAKLQEAKRKAELKAKEDAEKAKKDAKRKELEQF) adopt a coiled-coil conformation. The segment covering 42–86 (EEKKKKEAKLQEAKRKAELKAKEDAEKAKKDAKRKELEQFDQLDE) has biased composition (basic and acidic residues). Residues 269–285 (DDMDDGQFDDLDDDDFM) are compositionally biased toward acidic residues.

Belongs to the eIF-3 subunit J family. Component of the eukaryotic translation initiation factor 3 (eIF-3) complex.

The protein localises to the cytoplasm. Component of the eukaryotic translation initiation factor 3 (eIF-3) complex, which is involved in protein synthesis of a specialized repertoire of mRNAs and, together with other initiation factors, stimulates binding of mRNA and methionyl-tRNAi to the 40S ribosome. The eIF-3 complex specifically targets and initiates translation of a subset of mRNAs involved in cell proliferation. This chain is Eukaryotic translation initiation factor 3 subunit J, found in Candida albicans (strain SC5314 / ATCC MYA-2876) (Yeast).